Here is an 883-residue protein sequence, read N- to C-terminus: Phosphoenolpyruvate carboxylase (883 aa).

Catalysis depends on residues histidine 138 and lysine 546.

The protein belongs to the PEPCase type 1 family. It depends on Mg(2+) as a cofactor.

The catalysed reaction is oxaloacetate + phosphate = phosphoenolpyruvate + hydrogencarbonate. In terms of biological role, forms oxaloacetate, a four-carbon dicarboxylic acid source for the tricarboxylic acid cycle. This Salmonella dublin (strain CT_02021853) protein is Phosphoenolpyruvate carboxylase.